The sequence spans 382 residues: MFYEKIQTPAYILEEDKLRKNCELLASVGEKSGAKVLLALKGFAFSGAMKIVGEYLKGCTCSGLWEAKFAKEYMDKEIHTYSPAFKEDEIGEIASLSHHIVFNSLAQFHKFQSKTQKNSLGLRCNVEFSLAPKELYNPCGRYSRLGIRAKDFENVDLNAIEGLHFHALCEESADALEAVLKVFKEKFGKWIGQMKWVNFGGGHHITKKGYDVEKLIALCKNFSDKYGVQVYLEPGEAVGWQTGNLVASVVDIIENEKQIAILDTSSEAHMPDTIIMPYTSEVLNARILATRENEKISDLKENEFAYLLTGNTCLAGDVMGEYAFDKKLKIGDKIVFLDQIHYTIVKNTTFNGIRLPNLMLLDHKNELQMIREFSYKDYSLRN.

At K41 the chain carries N6-(pyridoxal phosphate)lysine. Residues E236 and D272 each coordinate substrate.

This sequence belongs to the Orn/Lys/Arg decarboxylase class-II family. NspC subfamily. Homodimer. Requires pyridoxal 5'-phosphate as cofactor.

Its subcellular location is the cytoplasm. It catalyses the reaction carboxynorspermidine + H(+) = norspermidine + CO2. The catalysed reaction is carboxyspermidine + H(+) = spermidine + CO2. Its function is as follows. Catalyzes the decarboxylation of carboxynorspermidine and carboxyspermidine in vitro. In vivo, responsible for synthesizing spermidine, but not sym-norspermidine. The chain is Carboxynorspermidine/carboxyspermidine decarboxylase from Campylobacter jejuni subsp. jejuni serotype O:6 (strain 81116 / NCTC 11828).